Reading from the N-terminus, the 689-residue chain is Glycine--tRNA ligase beta subunit (689 aa).

It belongs to the class-II aminoacyl-tRNA synthetase family. Tetramer of two alpha and two beta subunits.

It localises to the cytoplasm. It catalyses the reaction tRNA(Gly) + glycine + ATP = glycyl-tRNA(Gly) + AMP + diphosphate. The chain is Glycine--tRNA ligase beta subunit from Pseudoalteromonas translucida (strain TAC 125).